The sequence spans 48 residues: Large ribosomal subunit protein bL33A (48 aa).

Belongs to the bacterial ribosomal protein bL33 family.

This chain is Large ribosomal subunit protein bL33A, found in Bacillus mycoides (strain KBAB4) (Bacillus weihenstephanensis).